The primary structure comprises 387 residues: Bifunctional chorismate mutase/prephenate dehydratase (387 aa).

A Chorismate mutase domain is found at 1–92 (MNPDNPLLAL…DSVLTQQALL (92 aa)). The substrate site is built by Arg-11, Arg-28, Lys-39, Asp-48, Glu-52, Ser-84, and Gln-88. The 181-residue stretch at 105 to 285 (RIAFLGPKGS…NHTRFIVLAR (181 aa)) folds into the Prephenate dehydratase domain. The ACT domain occupies 299–376 (TLIMATGQQA…RSLKVLGCYP (78 aa)).

It is found in the cytoplasm. The catalysed reaction is chorismate = prephenate. It carries out the reaction prephenate + H(+) = 3-phenylpyruvate + CO2 + H2O. It functions in the pathway amino-acid biosynthesis; L-phenylalanine biosynthesis; phenylpyruvate from prephenate: step 1/1. It participates in metabolic intermediate biosynthesis; prephenate biosynthesis; prephenate from chorismate: step 1/1. Catalyzes the Claisen rearrangement of chorismate to prephenate and the decarboxylation/dehydration of prephenate to phenylpyruvate. In Enterobacter agglomerans (Erwinia herbicola), this protein is Bifunctional chorismate mutase/prephenate dehydratase (pheA).